Here is a 77-residue protein sequence, read N- to C-terminus: Small ribosomal subunit protein bS16c (77 aa).

It belongs to the bacterial ribosomal protein bS16 family.

The protein resides in the plastid. It is found in the cyanelle. This is Small ribosomal subunit protein bS16c from Cyanophora paradoxa.